Here is a 189-residue protein sequence, read N- to C-terminus: Thymidine kinase (189 aa).

Residues 9 to 16 (GTMNSGKT) and 85 to 88 (DECQ) each bind ATP. The active-site Proton acceptor is glutamate 86. Zn(2+)-binding residues include cysteine 143, cysteine 146, cysteine 180, and histidine 183.

It belongs to the thymidine kinase family. As to quaternary structure, homotetramer.

Its subcellular location is the cytoplasm. The enzyme catalyses thymidine + ATP = dTMP + ADP + H(+). The chain is Thymidine kinase from Streptococcus agalactiae serotype Ia (strain ATCC 27591 / A909 / CDC SS700).